We begin with the raw amino-acid sequence, 82 residues long: ATP synthase subunit c (82 aa).

2 helical membrane passes run 7–27 (AASV…PGIG) and 57–77 (LAFM…LLFA).

Belongs to the ATPase C chain family. In terms of assembly, F-type ATPases have 2 components, F(1) - the catalytic core - and F(0) - the membrane proton channel. F(1) has five subunits: alpha(3), beta(3), gamma(1), delta(1), epsilon(1). F(0) has four main subunits: a(1), b(1), b'(1) and c(10-14). The alpha and beta chains form an alternating ring which encloses part of the gamma chain. F(1) is attached to F(0) by a central stalk formed by the gamma and epsilon chains, while a peripheral stalk is formed by the delta, b and b' chains.

Its subcellular location is the cellular thylakoid membrane. Functionally, f(1)F(0) ATP synthase produces ATP from ADP in the presence of a proton or sodium gradient. F-type ATPases consist of two structural domains, F(1) containing the extramembraneous catalytic core and F(0) containing the membrane proton channel, linked together by a central stalk and a peripheral stalk. During catalysis, ATP synthesis in the catalytic domain of F(1) is coupled via a rotary mechanism of the central stalk subunits to proton translocation. Its function is as follows. Key component of the F(0) channel; it plays a direct role in translocation across the membrane. A homomeric c-ring of between 10-14 subunits forms the central stalk rotor element with the F(1) delta and epsilon subunits. The polypeptide is ATP synthase subunit c (Synechococcus sp. (strain RCC307)).